Reading from the N-terminus, the 213-residue chain is Iron sulfur cluster assembly protein 1, mitochondrial (213 aa).

Belongs to the NifU family. As to quaternary structure, component of the core Fe-S cluster (ISC) assembly machinery. [2Fe-2S] cluster serves as cofactor.

Its subcellular location is the mitochondrion matrix. Its pathway is cofactor biosynthesis; iron-sulfur cluster biosynthesis. Functionally, scaffold protein for the de novo synthesis of iron-sulfur (Fe-S) clusters within mitochondria, which is required for maturation of both mitochondrial and cytoplasmic [2Fe-2S] and [4Fe-4S] proteins. First, a [2Fe-2S] cluster is transiently assembled on the scaffold protein ISU1. In a second step, the cluster is released from ISU1, transferred to a glutaredoxin, followed by the formation of mitochondrial [2Fe-2S] proteins, the synthesis of [4Fe-4S] clusters and their target-specific insertion into the recipient apoproteins. Cluster assembly on ISU1 depends on the function of the cysteine desulfurase complex NFS1-ISD11, which serves as the sulfur donor for cluster synthesis, the iron-binding protein frataxin as the putative iron donor, and the electron transfer chain comprised of ferredoxin reductase and ferredoxin, which receive their electrons from NADH. This chain is Iron sulfur cluster assembly protein 1, mitochondrial (ISU1), found in Candida glabrata (strain ATCC 2001 / BCRC 20586 / JCM 3761 / NBRC 0622 / NRRL Y-65 / CBS 138) (Yeast).